The following is a 230-amino-acid chain: 2-amino-5-formylamino-6-ribosylaminopyrimidin-4(3H)-one 5'-monophosphate deformylase (230 aa).

Fe cation is bound by residues E29, H31, D40, and H109.

Belongs to the creatininase superfamily. FAPy deformylase family. In terms of assembly, homodimer. Fe(2+) is required as a cofactor. Zn(2+) serves as cofactor.

The enzyme catalyses 2-amino-5-formylamino-6-(5-phospho-D-ribosylamino)pyrimidin-4(3H)-one + H2O = 2,5-diamino-6-(1-D-ribosylamino)pyrimidin-4(3H)-one 5'-phosphate + formate + H(+). The protein operates within cofactor biosynthesis; coenzyme F420 biosynthesis. Its pathway is cofactor biosynthesis; riboflavin biosynthesis. Catalyzes the hydrolysis of the formamide of 2-amino-5-formylamino-6-ribosylamino-4(3H)-pyrimidinone 5'-monophosphate (FAPy) to form 2,5-diamino-6-ribosylamino-4(3H)-pyrimidinone 5'-phosphate (APy). The protein is 2-amino-5-formylamino-6-ribosylaminopyrimidin-4(3H)-one 5'-monophosphate deformylase of Methanobrevibacter smithii (strain ATCC 35061 / DSM 861 / OCM 144 / PS).